The sequence spans 188 residues: GTPase KRas (188 aa).

GTP is bound by residues 10–18 (GAGGVGKSA), 29–35 (VDEYDPT), 59–60 (AG), and 116–119 (NKYD). The Effector region motif lies at 32–40 (YDPTIEDSY). Residues 167 to 188 (KEKMSKEGKKKKKKSKTKCILM) form a disordered region. Cys185 is subject to Cysteine methyl ester. Cys185 carries the S-farnesyl cysteine lipid modification. A propeptide spans 186 to 188 (ILM) (removed in mature form).

The protein belongs to the small GTPase superfamily. Ras family.

It is found in the cell membrane. The protein localises to the cytoplasm. The enzyme catalyses GTP + H2O = GDP + phosphate + H(+). Its activity is regulated as follows. Alternates between an inactive form bound to GDP and an active form bound to GTP. Activated by a guanine nucleotide-exchange factor (GEF) and inactivated by a GTPase-activating protein (GAP). Functionally, ras proteins bind GDP/GTP and possess intrinsic GTPase activity. Plays an important role in the regulation of cell proliferation. May play a role in promoting oncogenic events by inducing transcriptional silencing of tumor suppressor genes (TSGs). This is GTPase KRas (kras) from Kryptolebias marmoratus (Mangrove killifish).